A 100-amino-acid chain; its full sequence is Nucleoid-associated protein Cagg_3200 (100 aa).

Belongs to the YbaB/EbfC family. Homodimer.

It is found in the cytoplasm. Its subcellular location is the nucleoid. Its function is as follows. Binds to DNA and alters its conformation. May be involved in regulation of gene expression, nucleoid organization and DNA protection. This Chloroflexus aggregans (strain MD-66 / DSM 9485) protein is Nucleoid-associated protein Cagg_3200.